We begin with the raw amino-acid sequence, 141 residues long: Nucleoside diphosphate kinase (141 aa).

6 residues coordinate ATP: K11, F59, R87, T93, R104, and N114. The active-site Pros-phosphohistidine intermediate is H117.

This sequence belongs to the NDK family. Homotetramer. Mg(2+) serves as cofactor.

It localises to the cytoplasm. The catalysed reaction is a 2'-deoxyribonucleoside 5'-diphosphate + ATP = a 2'-deoxyribonucleoside 5'-triphosphate + ADP. The enzyme catalyses a ribonucleoside 5'-diphosphate + ATP = a ribonucleoside 5'-triphosphate + ADP. Its function is as follows. Major role in the synthesis of nucleoside triphosphates other than ATP. The ATP gamma phosphate is transferred to the NDP beta phosphate via a ping-pong mechanism, using a phosphorylated active-site intermediate. The polypeptide is Nucleoside diphosphate kinase (Pseudomonas fluorescens (strain Pf0-1)).